We begin with the raw amino-acid sequence, 450 residues long: Thiamine biosynthesis regulatory protein (450 aa).

The span at 1-12 (MVNSKRQQRSKK) shows a compositional bias: basic residues. The segment at 1 to 23 (MVNSKRQQRSKKVASSSKVPPTK) is disordered. Positions 13-23 (VASSSKVPPTK) are enriched in low complexity. The segment at residues 30 to 57 (CWACRFKKRRCDENRPICSLCAKHGDNC) is a DNA-binding region (zn(2)-C6 fungal-type). Positions 210–234 (TDQLPSPGHSMSSAEETTTAALSSP) are disordered.

It is found in the nucleus. In terms of biological role, positive regulator of thiamine biosynthesis. The polypeptide is Thiamine biosynthesis regulatory protein (THI2) (Saccharomyces cerevisiae (strain ATCC 204508 / S288c) (Baker's yeast)).